The primary structure comprises 84 residues: Small ribosomal subunit protein bS20 (84 aa).

Residues 1–25 are disordered; it reads MPVIKSAMKRVRTSEKAAARNRSQM.

The protein belongs to the bacterial ribosomal protein bS20 family.

Its function is as follows. Binds directly to 16S ribosomal RNA. The protein is Small ribosomal subunit protein bS20 of Pediococcus pentosaceus (strain ATCC 25745 / CCUG 21536 / LMG 10740 / 183-1w).